We begin with the raw amino-acid sequence, 180 residues long: Oligoribonuclease (180 aa).

The Exonuclease domain occupies 7-170 (LIWIDLEMTG…SDIQDSIDEL (164 aa)). Tyr128 is a catalytic residue.

It belongs to the oligoribonuclease family.

The protein resides in the cytoplasm. Functionally, 3'-to-5' exoribonuclease specific for small oligoribonucleotides. The polypeptide is Oligoribonuclease (Ruthia magnifica subsp. Calyptogena magnifica).